Consider the following 190-residue polypeptide: Adenine phosphoribosyltransferase (190 aa).

This sequence belongs to the purine/pyrimidine phosphoribosyltransferase family. In terms of assembly, homodimer.

It localises to the cytoplasm. The catalysed reaction is AMP + diphosphate = 5-phospho-alpha-D-ribose 1-diphosphate + adenine. It participates in purine metabolism; AMP biosynthesis via salvage pathway; AMP from adenine: step 1/1. Functionally, catalyzes a salvage reaction resulting in the formation of AMP, that is energically less costly than de novo synthesis. The sequence is that of Adenine phosphoribosyltransferase from Treponema denticola (strain ATCC 35405 / DSM 14222 / CIP 103919 / JCM 8153 / KCTC 15104).